A 423-amino-acid polypeptide reads, in one-letter code: Histidine--tRNA ligase (423 aa).

This sequence belongs to the class-II aminoacyl-tRNA synthetase family.

The protein localises to the cytoplasm. It catalyses the reaction tRNA(His) + L-histidine + ATP = L-histidyl-tRNA(His) + AMP + diphosphate + H(+). The chain is Histidine--tRNA ligase from Picrophilus torridus (strain ATCC 700027 / DSM 9790 / JCM 10055 / NBRC 100828 / KAW 2/3).